Consider the following 932-residue polypeptide: MYCBP-associated protein (932 aa).

2 disordered regions span residues 1–39 (MMKK…PVSN) and 165–187 (EEPK…PPQH). Residues 165–178 (EEPKPKPPKEEERP) are compositionally biased toward basic and acidic residues. Ser559 is modified (phosphoserine). Position 560 is a phosphothreonine (Thr560). Ser566 is subject to Phosphoserine. Residues 789 to 886 (LPDEQGQKSP…TAPSQEPIDP (98 aa)) are disordered. The span at 795-806 (QKSPPVTESKVT) shows a compositional bias: polar residues. Basic and acidic residues predominate over residues 810–869 (AGKEDRRGGAQEKKQLGTKDKDDKRGSKTPGKEDRPNSKKLKPKDDKKVVKSASRDRLLS).

As to quaternary structure, interacts with MYCBP.

The protein resides in the cytoplasm. It is found in the membrane. May play a role in spermatogenesis. May be involved in synaptic processes. The sequence is that of MYCBP-associated protein from Mus musculus (Mouse).